A 187-amino-acid chain; its full sequence is CASP-like protein 3A2 (187 aa).

The Cytoplasmic portion of the chain corresponds to 1-24 (MTSNGEGGEVVAKRRRKGIKELVQ). The helical transmembrane segment at 25–45 (VALRGGCLAASATAMAVMLTA) threads the bilayer. The Extracellular segment spans residues 46–71 (TEEGVADIYGFKLTLSSNWSFSPSYQ). N-linked (GlcNAc...) asparagine glycosylation occurs at Asn63. Residues 72–92 (YVVGACAGTVLYSLLQLCLGV) traverse the membrane as a helical segment. The Cytoplasmic segment spans residues 93 to 107 (YRLVTGSPITPSRFQ). A helical membrane pass occupies residues 108–128 (AWLCFTSDQLFCYLMMSAGSA). At 129 to 162 (GSGVTNLNKTGIRHTPLPDFCKTLSSFCNHVALS) the chain is on the extracellular side. Residue Asn136 is glycosylated (N-linked (GlcNAc...) asparagine). A helical membrane pass occupies residues 163 to 183 (LLLVFLSFIFLASSSFFTVLV). Residues 184 to 187 (LSTP) are Cytoplasmic-facing.

Belongs to the Casparian strip membrane proteins (CASP) family. As to quaternary structure, homodimer and heterodimers.

The protein resides in the cell membrane. In Arabidopsis thaliana (Mouse-ear cress), this protein is CASP-like protein 3A2.